Reading from the N-terminus, the 134-residue chain is Arsenate reductase (134 aa).

Catalysis depends on nucleophile residues Cys-11, Cys-83, and Cys-90. 2 cysteine pairs are disulfide-bonded: Cys-11/Cys-83 and Cys-83/Cys-90.

It belongs to the low molecular weight phosphotyrosine protein phosphatase family. Thioredoxin-coupled ArsC subfamily.

It localises to the cytoplasm. It carries out the reaction arsenate + [thioredoxin]-dithiol + H(+) = arsenite + [thioredoxin]-disulfide + H2O. Catalyzes the reduction of arsenate [As(V)] to arsenite [As(III)]. In Bacillus cereus (strain AH187), this protein is Arsenate reductase.